We begin with the raw amino-acid sequence, 200 residues long: MTETDQTPDTAPEAAPEVAPIVSDDLAPLRAKTIVLVGLMGVGKSSVGRRLANVLGLPFRDADNEVEAAAGRSISEIFAELGEPAFRDGERRVIARLLDEPPHVLATGGGAFVNAETRALINEKAVSVWLKADVELLARRVSRKDNRPLVRGKDPVKVLTELAEARYPAYAEAQVHVETGDTPHMVAVEAILTALRQAHA.

41-46 lines the ATP pocket; it reads GVGKSS. Serine 45 is a Mg(2+) binding site. Substrate-binding residues include aspartate 63, arginine 87, and glycine 109. Arginine 147 lines the ATP pocket. Arginine 166 is a binding site for substrate.

This sequence belongs to the shikimate kinase family. Monomer. It depends on Mg(2+) as a cofactor.

The protein localises to the cytoplasm. The catalysed reaction is shikimate + ATP = 3-phosphoshikimate + ADP + H(+). It participates in metabolic intermediate biosynthesis; chorismate biosynthesis; chorismate from D-erythrose 4-phosphate and phosphoenolpyruvate: step 5/7. In terms of biological role, catalyzes the specific phosphorylation of the 3-hydroxyl group of shikimic acid using ATP as a cosubstrate. The sequence is that of Shikimate kinase from Caulobacter vibrioides (strain NA1000 / CB15N) (Caulobacter crescentus).